The primary structure comprises 322 residues: uncharacterized protein (322 aa).

Residues 34–286 (KFKQKIFKIP…QRLSKDKVPE (253 aa)) form the Radical SAM core domain. Residues Cys50, Cys58, and Cys61 each contribute to the [4Fe-4S] cluster site.

The protein belongs to the radical SAM superfamily. Requires [4Fe-4S] cluster as cofactor.

This is an uncharacterized protein from Methanocaldococcus jannaschii (strain ATCC 43067 / DSM 2661 / JAL-1 / JCM 10045 / NBRC 100440) (Methanococcus jannaschii).